The following is a 244-amino-acid chain: tRNA pseudouridine synthase B (244 aa).

Catalysis depends on Asp46, which acts as the Nucleophile.

Belongs to the pseudouridine synthase TruB family. Type 1 subfamily.

It carries out the reaction uridine(55) in tRNA = pseudouridine(55) in tRNA. Responsible for synthesis of pseudouridine from uracil-55 in the psi GC loop of transfer RNAs. The chain is tRNA pseudouridine synthase B from Bordetella avium (strain 197N).